Reading from the N-terminus, the 547-residue chain is Glucose-6-phosphate isomerase (547 aa).

E353 (proton donor) is an active-site residue. Residues H384 and K512 contribute to the active site.

Belongs to the GPI family.

It is found in the cytoplasm. The catalysed reaction is alpha-D-glucose 6-phosphate = beta-D-fructose 6-phosphate. It functions in the pathway carbohydrate biosynthesis; gluconeogenesis. Its pathway is carbohydrate degradation; glycolysis; D-glyceraldehyde 3-phosphate and glycerone phosphate from D-glucose: step 2/4. Functionally, catalyzes the reversible isomerization of glucose-6-phosphate to fructose-6-phosphate. This is Glucose-6-phosphate isomerase from Glaesserella parasuis serovar 5 (strain SH0165) (Haemophilus parasuis).